The following is a 689-amino-acid chain: Glycine--tRNA ligase beta subunit (689 aa).

The protein belongs to the class-II aminoacyl-tRNA synthetase family. Tetramer of two alpha and two beta subunits.

The protein localises to the cytoplasm. The catalysed reaction is tRNA(Gly) + glycine + ATP = glycyl-tRNA(Gly) + AMP + diphosphate. This chain is Glycine--tRNA ligase beta subunit, found in Escherichia coli O8 (strain IAI1).